The chain runs to 164 residues: Phosphopantetheine adenylyltransferase (164 aa).

Substrate is bound at residue serine 11. Residues 11–12 (SF) and histidine 19 contribute to the ATP site. Positions 43, 76, and 90 each coordinate substrate. Residues 91-93 (GLR), glutamate 101, and 126-132 (YQHISSS) each bind ATP.

It belongs to the bacterial CoaD family. As to quaternary structure, homohexamer. The cofactor is Mg(2+).

It localises to the cytoplasm. It catalyses the reaction (R)-4'-phosphopantetheine + ATP + H(+) = 3'-dephospho-CoA + diphosphate. Its pathway is cofactor biosynthesis; coenzyme A biosynthesis; CoA from (R)-pantothenate: step 4/5. Reversibly transfers an adenylyl group from ATP to 4'-phosphopantetheine, yielding dephospho-CoA (dPCoA) and pyrophosphate. In Streptococcus gordonii (strain Challis / ATCC 35105 / BCRC 15272 / CH1 / DL1 / V288), this protein is Phosphopantetheine adenylyltransferase.